Here is a 441-residue protein sequence, read N- to C-terminus: GTPase Der (441 aa).

EngA-type G domains are found at residues 4 to 169 and 178 to 353; these read PVVA…PDSS and PRVA…ENNS. GTP contacts are provided by residues 10-17, 57-61, 120-123, 184-191, 231-235, and 296-299; these read GRPNVGKS, DTGGI, NKVD, GKPNVGKS, DTAGL, and NKWD. The KH-like domain occupies 354-438; that stretch reads MRVATGVLNE…ALKFITRERK (85 aa).

This sequence belongs to the TRAFAC class TrmE-Era-EngA-EngB-Septin-like GTPase superfamily. EngA (Der) GTPase family. In terms of assembly, associates with the 50S ribosomal subunit.

GTPase that plays an essential role in the late steps of ribosome biogenesis. The polypeptide is GTPase Der (Agathobacter rectalis (strain ATCC 33656 / DSM 3377 / JCM 17463 / KCTC 5835 / VPI 0990) (Eubacterium rectale)).